The primary structure comprises 521 residues: MSHLFPPSSPVAGKPLESPQKEPGKLANTSVLTLGRKRYNYELEEYPTPDPSSSIGRQSSPVKDITSRLNETKSALSSPSKQEKVLAGPIEIELDASDPSRLAIGRKKSVCNIILPCRKNISRQHAFISYAADRNEIKLECNGTNGLSVHLPYSMQLHLVKPFPTRNFYKLVAEEPLTSQNTKQSHGKTLQKNQNFISFVLAKGETVTFPYIQGSFINFTGVTVCLSLKKVAPYPGDGNNNFDEENSTETEDELCLLTTTSDDFSWQKETPSMKFVPVEHSPRTEQISKPLLIASPALVKNSPISYRTTPQTSFVINQPSTPKKLKRKSISLKNNTIQETPLPKDKIIGTLSASTRSGGINEEESFAAVAKKTKELSSTTAIVSPAQKRLKTSLNIIPEISRSLSERGIRFDDLVHVLCNHLAFSNLQQTPLSQLQNINSNTSQLSKDELKKVLETISCIGIIVREGKDASGKPLEDEYYYDVENDDSDERKILYNSLKGRSRLRSCRKKHKQYFWKRPTK.

The disordered stretch occupies residues 1 to 63; that stretch reads MSHLFPPSSP…SIGRQSSPVK (63 aa). The segment covering 51–63 has biased composition (polar residues); that stretch reads PSSSIGRQSSPVK. The FHA domain occupies 102–156; the sequence is LAIGRKKSVCNIILPCRKNISRQHAFISYAADRNEIKLECNGTNGLSVHLPYSMQ. Phosphoserine occurs at positions 281, 295, 302, and 384.

It belongs to the PLM2/TOS4 family. In terms of processing, phosphorylated by CDC28.

The protein resides in the nucleus. In terms of biological role, binds to the promoters of genes with functions important for the G1/S (start) transition; primarily genes involved in DNA synthesis and repair, chromosome segregation, nuclear division and transcription. This chain is Protein PLM2 (PLM2), found in Saccharomyces cerevisiae (strain ATCC 204508 / S288c) (Baker's yeast).